The following is a 359-amino-acid chain: Protein Wnt-5a (359 aa).

The signal sequence occupies residues 1-20; sequence MATTHLTAALALLCALLQVD. C83 and C94 form a disulfide bridge. N93 and N99 each carry an N-linked (GlcNAc...) asparagine glycan. Cystine bridges form between C133-C141, C143-C161, C217-C231, C219-C226, C288-C319, C304-C314, C318-C358, C334-C349, C336-C346, and C341-C342. A lipid anchor (O-palmitoleoyl serine; by PORCN) is attached at S223. N-linked (GlcNAc...) asparagine glycans are attached at residues N291 and N305.

This sequence belongs to the Wnt family. Palmitoleoylation is required for efficient binding to frizzled receptors. Depalmitoleoylation leads to Wnt signaling pathway inhibition. In terms of tissue distribution, neuroectodermal and non-neuroectodermal tissues.

It localises to the secreted. The protein localises to the extracellular space. The protein resides in the extracellular matrix. Functionally, ligand for members of the frizzled family of seven transmembrane receptors. Can activate or inhibit canonical Wnt signaling, depending on receptor context. Required during embryogenesis for extension of the primary anterior-posterior axis. This Ambystoma mexicanum (Axolotl) protein is Protein Wnt-5a (WNT-5A).